The primary structure comprises 214 residues: Adenylate kinase (214 aa).

10–15 is an ATP binding site; sequence GAGKGT. The tract at residues 30–59 is NMP; it reads STGDMLRAAVKAGSELGLKAKEIMDAGKLV. AMP contacts are provided by residues threonine 31, arginine 36, 57–59, 85–88, and glutamine 92; these read KLV and GFPR. Positions 122-159 are LID; the sequence is GRRVHAASGRVYHVKFNPPKVEDKDDVTGEDLTIRKDD. Residues arginine 123 and 132–133 contribute to the ATP site; that span reads VY. Residues arginine 156 and arginine 167 each coordinate AMP. An ATP-binding site is contributed by arginine 200.

The protein belongs to the adenylate kinase family. Monomer.

The protein resides in the cytoplasm. The enzyme catalyses AMP + ATP = 2 ADP. The protein operates within purine metabolism; AMP biosynthesis via salvage pathway; AMP from ADP: step 1/1. Functionally, catalyzes the reversible transfer of the terminal phosphate group between ATP and AMP. Plays an important role in cellular energy homeostasis and in adenine nucleotide metabolism. This is Adenylate kinase from Yersinia enterocolitica serotype O:8 / biotype 1B (strain NCTC 13174 / 8081).